The following is a 589-amino-acid chain: TAF5-like RNA polymerase II p300/CBP-associated factor-associated factor 65 kDa subunit 5L (589 aa).

6 WD repeats span residues 266-305 (NTEQLLNTAEISSDSKLLAAGFDNSCIKLWSLRSKKLKSE), 340-379 (GHCGPVYSTRFLADSSGLLSCSEDMSIRYWDLGSFTNTVL), 382-421 (GHAYPVWDVDISPFSLYFASGSHDRTARLWSFDRTYPLRI), 424-463 (GHLADVDCVKFHPNSNYLATGSTDKTVRLWSAQQGNSVRL), 466-505 (GHRGPVLSLSFSPNGKYLASAGEDQRLKLWDLASGTLFKE), and 508-547 (GHTDSITSLAFSPDSGLIASASMDNSVRVWDIRSTCCNTP).

Belongs to the WD repeat TAF5 family. The PCAF complex is composed of a number of TBP-associated factors (TAFS), such as TAF5, TAF5L, TAF6, TAF6L, TAF9, TAF10 and TAF12, PCAF, and also PCAF-associated factors (PAFs), such as TADA2L/ADA2, TADA3L/ADA3 and SPT3. Component of the STAGA transcription coactivator-HAT complex, at least composed of SUPT3H, GCN5L2, TAF5L, TAF6L, SUPT7L, TADA3L, TAD1L, TAF10, TAF12, TRRAP and TAF9.

Its subcellular location is the nucleus. Functions as a component of the PCAF complex. The PCAF complex is capable of efficiently acetylating histones in a nucleosomal context. The PCAF complex could be considered as the human version of the yeast SAGA complex. With TAF6L, acts as an epigenetic regulator essential for somatic reprogramming. Regulates target genes through H3K9ac deposition and MYC recruitment which trigger MYC regulatory network to orchestrate gene expression programs to control embryonic stem cell state. The chain is TAF5-like RNA polymerase II p300/CBP-associated factor-associated factor 65 kDa subunit 5L from Mus musculus (Mouse).